Reading from the N-terminus, the 70-residue chain is Probable tautomerase RSp0893 (70 aa).

Pro-2 serves as the catalytic Proton acceptor; via imino nitrogen.

The protein belongs to the 4-oxalocrotonate tautomerase family.

This Ralstonia nicotianae (strain ATCC BAA-1114 / GMI1000) (Ralstonia solanacearum) protein is Probable tautomerase RSp0893.